The following is a 597-amino-acid chain: Nucleolar protein 58 (597 aa).

Residues I285–G410 form the Nop domain. The tract at residues A452–E597 is disordered. Basic residues predominate over residues K482 to K499. A compositionally biased stretch (basic and acidic residues) spans I532–A551. The segment covering E552–E561 has biased composition (acidic residues). Residues K588–E597 show a composition bias toward basic residues.

It belongs to the NOP5/NOP56 family.

It is found in the nucleus. The protein localises to the nucleolus. Required for pre-18S rRNA processing. May bind microtubules. The polypeptide is Nucleolar protein 58 (nop-58) (Neurospora crassa (strain ATCC 24698 / 74-OR23-1A / CBS 708.71 / DSM 1257 / FGSC 987)).